We begin with the raw amino-acid sequence, 382 residues long: UDP-4-amino-4-deoxy-L-arabinose--oxoglutarate aminotransferase (382 aa).

An N6-(pyridoxal phosphate)lysine modification is found at Lys182.

Belongs to the DegT/DnrJ/EryC1 family. ArnB subfamily. Homodimer. Pyridoxal 5'-phosphate is required as a cofactor.

It carries out the reaction UDP-4-amino-4-deoxy-beta-L-arabinose + 2-oxoglutarate = UDP-beta-L-threo-pentopyranos-4-ulose + L-glutamate. The protein operates within nucleotide-sugar biosynthesis; UDP-4-deoxy-4-formamido-beta-L-arabinose biosynthesis; UDP-4-deoxy-4-formamido-beta-L-arabinose from UDP-alpha-D-glucuronate: step 2/3. Its pathway is bacterial outer membrane biogenesis; lipopolysaccharide biosynthesis. In terms of biological role, catalyzes the conversion of UDP-4-keto-arabinose (UDP-Ara4O) to UDP-4-amino-4-deoxy-L-arabinose (UDP-L-Ara4N). The modified arabinose is attached to lipid A and is required for resistance to polymyxin and cationic antimicrobial peptides. This chain is UDP-4-amino-4-deoxy-L-arabinose--oxoglutarate aminotransferase, found in Pectobacterium atrosepticum (strain SCRI 1043 / ATCC BAA-672) (Erwinia carotovora subsp. atroseptica).